A 321-amino-acid polypeptide reads, in one-letter code: MNRPERLQPGVKLRDADKVSRIPVKIVPSERETMLRKPDWLRVKLPASNQRILEIKQALRSNGLHSVCEEASCPNLAECFNHGTATFMILGAICTRRCPFCDVAHGRPLKPDAEEPVKLAQTIRDMKLKYVVITSVDRDDLRDGGAQHFADCIREIRKLNPEIKIEILVPDFRGRIDAALDILSTEPPDVFNHNLETAPMHYRKARPGANYQWSLDLLKRFKERHPNVPTKSGLMMGLGETNEEIAQVLRDLREHKVEMLTLGQYLQPSKFHLPVERYVSPAEFDELKVLADELGFTHAACGPLVRSSYHADLQAQGKEVK.

Residues Cys68, Cys73, Cys79, Cys94, Cys98, Cys101, and Ser308 each coordinate [4Fe-4S] cluster. The 218-residue stretch at 80-297 (FNHGTATFMI…KVLADELGFT (218 aa)) folds into the Radical SAM core domain.

Belongs to the radical SAM superfamily. Lipoyl synthase family. The cofactor is [4Fe-4S] cluster.

It is found in the cytoplasm. It carries out the reaction [[Fe-S] cluster scaffold protein carrying a second [4Fe-4S](2+) cluster] + N(6)-octanoyl-L-lysyl-[protein] + 2 oxidized [2Fe-2S]-[ferredoxin] + 2 S-adenosyl-L-methionine + 4 H(+) = [[Fe-S] cluster scaffold protein] + N(6)-[(R)-dihydrolipoyl]-L-lysyl-[protein] + 4 Fe(3+) + 2 hydrogen sulfide + 2 5'-deoxyadenosine + 2 L-methionine + 2 reduced [2Fe-2S]-[ferredoxin]. It participates in protein modification; protein lipoylation via endogenous pathway; protein N(6)-(lipoyl)lysine from octanoyl-[acyl-carrier-protein]: step 2/2. In terms of biological role, catalyzes the radical-mediated insertion of two sulfur atoms into the C-6 and C-8 positions of the octanoyl moiety bound to the lipoyl domains of lipoate-dependent enzymes, thereby converting the octanoylated domains into lipoylated derivatives. This chain is Lipoyl synthase, found in Shewanella sp. (strain ANA-3).